Consider the following 459-residue polypeptide: tRNA modification GTPase MnmE (459 aa).

(6S)-5-formyl-5,6,7,8-tetrahydrofolate-binding residues include Arg-20, Glu-85, and Arg-124. A TrmE-type G domain is found at 221–380 (GLSTVIIGRP…LEMAIQSLFF (160 aa)). K(+) is bound at residue Asn-231. Residues 231 to 236 (NVGKSS), 250 to 256 (TDIPGTT), and 275 to 278 (DTAG) each bind GTP. Ser-235 provides a ligand contact to Mg(2+). K(+) contacts are provided by Thr-250, Ile-252, and Thr-255. Thr-256 is a Mg(2+) binding site. Lys-459 is a (6S)-5-formyl-5,6,7,8-tetrahydrofolate binding site.

The protein belongs to the TRAFAC class TrmE-Era-EngA-EngB-Septin-like GTPase superfamily. TrmE GTPase family. As to quaternary structure, homodimer. Heterotetramer of two MnmE and two MnmG subunits. It depends on K(+) as a cofactor.

It localises to the cytoplasm. Its function is as follows. Exhibits a very high intrinsic GTPase hydrolysis rate. Involved in the addition of a carboxymethylaminomethyl (cmnm) group at the wobble position (U34) of certain tRNAs, forming tRNA-cmnm(5)s(2)U34. The protein is tRNA modification GTPase MnmE of Bacillus pumilus (strain SAFR-032).